The following is a 571-amino-acid chain: Proline--tRNA ligase (571 aa).

Belongs to the class-II aminoacyl-tRNA synthetase family. ProS type 1 subfamily. As to quaternary structure, homodimer.

It is found in the cytoplasm. It carries out the reaction tRNA(Pro) + L-proline + ATP = L-prolyl-tRNA(Pro) + AMP + diphosphate. Its function is as follows. Catalyzes the attachment of proline to tRNA(Pro) in a two-step reaction: proline is first activated by ATP to form Pro-AMP and then transferred to the acceptor end of tRNA(Pro). As ProRS can inadvertently accommodate and process non-cognate amino acids such as alanine and cysteine, to avoid such errors it has two additional distinct editing activities against alanine. One activity is designated as 'pretransfer' editing and involves the tRNA(Pro)-independent hydrolysis of activated Ala-AMP. The other activity is designated 'posttransfer' editing and involves deacylation of mischarged Ala-tRNA(Pro). The misacylated Cys-tRNA(Pro) is not edited by ProRS. The polypeptide is Proline--tRNA ligase (Pseudomonas syringae pv. syringae (strain B728a)).